A 226-amino-acid chain; its full sequence is ATP synthase subunit a (226 aa).

5 helical membrane-spanning segments follow: residues 17-37, 79-99, 105-125, 168-188, and 200-222; these read FNYL…AKLA, LVAT…IPGF, SLNL…FEGI, FGNI…APWV, and MALL…AVVV.

It belongs to the ATPase A chain family. F-type ATPases have 2 components, CF(1) - the catalytic core - and CF(0) - the membrane proton channel. CF(1) has five subunits: alpha(3), beta(3), gamma(1), delta(1), epsilon(1). CF(0) has three main subunits: a(1), b(2) and c(9-12). The alpha and beta chains form an alternating ring which encloses part of the gamma chain. CF(1) is attached to CF(0) by a central stalk formed by the gamma and epsilon chains, while a peripheral stalk is formed by the delta and b chains.

Its subcellular location is the cell inner membrane. Functionally, key component of the proton channel; it plays a direct role in the translocation of protons across the membrane. This Campylobacter fetus subsp. fetus (strain 82-40) protein is ATP synthase subunit a.